Here is a 4639-residue protein sequence, read N- to C-terminus: MGDSLENPDTSVDPIVNLSIANYDAFANYLRKAVTILLPEDDVVPASLNDALDDPVNQDTIRKFLSDPQVQALYVQRNCIKEDDSEQPAEGEDEKEQVTYQISNDVHFTNSRMASLACIKRGLVVEADKSIHSQLRLINFSDGSPYETLHAFISKSLAPYFKSYVKESGRADRDGDKMAPSVEKKLAELEMGLLHLQQNIDIPEITLTAHQTVNNVIRKCAEENRKAKVADFGDKVEDSSFLNLLQNGVNRWIAEIKKVTKLNRDPGSGTALQEISFWLNLERALYRIQEKRESPEVALTLDILKHGKRFHATVSFDTDTGLKQALATVADYNPLMKDFPINDLLSATELEKIRPAVQQIFAHLRKVRNTKYPIQRCLKLIEAISRDLSQQLLKVLGTRRLMHIPFDEFERVMNQCFEIFSCWDDEYDKLQGLLRDIVKKKRDEHLKMVWRVSPAHKKLQTRMEHMRKFRRQHEQLRTVILRVLRPTKPAVGDDGNVVETKQPYSLDAADANAIEEVNLAYENVKEVDCLDITKEGSEAWEAAVKRYEEKIDRVETRITAHLRDQLGTAKNANEMFRIFSRFNALFVRPHIRGAIREYQTQLIQRVKDDIEALHEKFKVQYPQSKSCRLSSVRDLPPVAGSIIWARQIDNQLTMYLKRVEDVLGKGWETHIEGQKLKADGDSFRAKLSISDVFHEWARKVQERNFGSTGRIFTIESTRSRIGRGNVLRLRVNFLPEIITLAKEVRNIKNLGFRVPLTIVNKAHQANQIYPYAISLIESVRTYERTLEKIEDRASIVPLVAGLRKDVLNLVSEGIGLIWESYKLDPYVIRLSECVTQFQEKVDDLLVVEEQLDVDVRSLETCPYSAATFVEILSKIQHAVDDLSLRQYSNLSVWVTRLDEEVEKKLALRLQAGIQAWTEALTGNKKEVDTSMDTDAPAQPTHKLGGDPQIQNAVHEIRITNQQMYLYPSIEEARFQIMQQFFAWQAIVTSQVRLQSTRYQVGLEKHVSQTYRNLLTKLPEGKILENAYGAIEQKVSEVRNYVDEWLRYQSLWDLQADMLYGRLGEDVNLWIKCLNDIKQSRTTFDTSDTRRAYGPIIIDYAKVQAKVTLKYDSWHKEALGKFGTLLGTEMTSFHSKVSKSRTDLEMQSIEAASTSDAVSFITYVQSLKKDMIAWDKQVEVFREAQRILERQRFQFPNTWLHVDNIEGEWSAFNEIIKRKDTAIQTQVASLQAKIVAEDKAVETRTVDFLNDWEKTKPTGGKIRPDDALQQLQIFESKYSRLKEERDNVVKAKEALELQESAVPNNSAERMNVALEELQDLRGVWSELSKVWTQIDETREKPWLSVQPRKLRQQLEAMMAQLKELPARLRMYESYEYVKKLIQSYIKVNMLIVELKSDALKERHWKQLTKQLRVNWVLSDLSLGQVWDVNLQKNEGIVKDIILVAQGEMALEEFLKQVRESWQNYELDLINYQNKCRIIRGWDDLFNKVKEHINSVAAMKLSPYYKVFEEEALTWEEKLNRINALFDVWIDVQRRWVYLEGIFSGSADIKTLLPVETSRFQSISSEFLGLMKKVTKSPKVMDVLNIPAVQRSLERLADLLGKIQKALGEYLERERTSFPRFYFVGDEDLLEIIGNSKNIARLQKHFKKMFAGVAAILLNEENNVILGISSREGEEVHFMNPVSTVEHPKINEWLSLVEKQMRFTLASLLAQAVQDIKQFRDGKIDPQAYMEWCDKYQAQIVVLAAQILWSEDVESALQQASENNQSKPMQRVLGNVESTLNVLADSVLQEQPPLRRRKLEHLINEFVHKRTVTRRLLNNGVTSPKSFQWLCEMRFYFDPRQTEVLQQLTIHMANARFFYGFEYLGVQDRLVQTPLTDRCYLTMTQALESRLGGSPFGPAGTGKTESVKALGNQLGRFVLVFNCDETFDFQAMGRIFVGLCQVGAWGCFDEFNRLEERMLSACSQQIQTIQEALKYEMDSNKESITVELVGKQVRVSPDMAIFITMNPGYAGRSNLPDNLKKLFRSLAMTTPDRQLIAEVMLFSQGFRSAEKLACKIVPFFKLCDEQLSNQSHYDFGLRALKSVLISAGNVKRDRIMKIKEQMKQRGDENIDEASVAENLPEQEILIQSVCETMVPKLVAEDIPLLFSLLSDVFPNVGYTRAEMKGLKEEIRKVCQEDYLVCGEGDEQGAAWMEKVLQLYQISNLNHGLMMVGPSGSGKSTAWKTLLKALERFEGVEGVAHVIDPKAISKEALYGVLDPNTREWTDGLFTHILRKIIDNVRGEINKRQWIIFDGDVDPEWVENLNSVLDDNKLLTLPNGERLSLPPNVRVMFEVQDLKFATLATVSRCGMVWFSEDVLSTEMIFENYLSRLRSIPLEDGDEDFVGVIKPAKDKEEEVSPSLQVQRDIALLLLPFFSADGIVVRTLEYAMDQEHIMDFTRLRALSSLFSMLNQAARNVLTFNAQHPDFPCSADQLEHYIPKALVYSVLWSFAGDAKLKVRIDLGDFVRSVTTVPLPGAAGAPIIDYEVNMSGDWVPWSNKVPVIEVETHKVASPDIVVPTLDTVRHESLLYTWLAEHKPLVLCGPPGSGKTMTLFSALRALPDMEVVGLNFSSATTPELLLKTFDHYCEYRKTPNGVVLSPVQIGKWLVLFCDEINLPDMDSYGTQRVISFLRQLVEHKGFYRASDQAWVSLERIQFVGACNPPTDPGRKPLSHRFLRHVPIIYVDYPGETSLKQIYGTFSRAMLRLMPALRGYAEPLTNAMVEFYLASQDRFTQDMQPHYVYSPREMTRWVRGICEAIRPLDSLPVEGLVRLWAHEALRLFQDRLVDDSERRWTNENIDLVGQKHFPGINQEEALQRPILYSNWLSKDYMPVNREELREYVHARLKVFYEEELDVPLVLFDEVLDHVLRIDRIFRQPQGHLLLIGVSGAGKTTLSRFVAWMNGLSIFQIKVHNKYTSEDFDEDLRCVLRRSGCKDEKIAFILDESNVLDSGFLERMNTLLANGEVPGLFEGDEYTTLMTQCKEGAQREGLMLDSSDELYKWFTQQVMRNLHVVFTMNPSTDGLKDRAATSPALFNRCVLNWFGDWSDSALFQVGKEFTTRVDLEKPNWHAPDFFPSVCPLVPANPTHRDAVINSCVYVHQTLHQANARLAKRGGRTMAVTPRHYLDFIHHFVKLYNEKRSDLEEQQLHLNVGLNKIAETVEQVEEMQKSLAVKKQELQAKNEAANAKLKQMFQDQQEAEKKKIQSQEIQIRLADQTVKIEEKRKYVMADLAQVEPAVIDAQAAVKSIRKQQLVEVRTMANPPSVVKLALESICLLLGENATDWKSIRAVIMRENFINSIVSNFGTENITDDVREKMKSKYLSNPDYNFEKVNRASMACGPMVKWAIAQIEYADMLKRVEPLREELRSLEEQADVNLASAKETKDLVEQLERSIAAYKEEYAQLISQAQAIKTDLENVQAKVDRSIALLKSLNIERERWESTSETFKSQMSTIIGDVLLSAAFIAYGGYFDQHYRLNLFTTWSQHLQAASIQYRADIARTEYLSNPDERLRWQANALPTDDLCTENAIMLKRFNRYPLIIDPSGQATTFLLNEYAGKKITKTSFLDDSFRKNLESALRFGNPLLVQDVENYDPILNPVLNRELRRTGGRVLITLGDQDIDLSPSFVIFLSTRDPTVEFPPDICSRVTFVNFTVTRSSLQSQCLNQVLKAERPDIDEKRSDLLKLQGEFRLRLRQLEKSLLQALNDAKGKILDDDSVITTLETLKKEAYDINQKVDETDKVIAEIETVSQQYLPLSVACSNIYFTMDSLNQVHFLYQYSLKMFLDIFSTVLYNNPKLEGRTDHSERLGIVTRDLFQVCYERVARGMIHIDRLTFALLMCKIHLKGTSESNLDAEFNFFLRSREGLLANPTPVEGLSAEQIESVNRLALRLPIFRKLLEKVRSIPELGAWLQQSSPEQVVPQLWDESKALSPIASSVHQLLLIQAFRPDRVIAAAHNVVNTVLGEDFMPNAEQELDFTSVVDKQLNCNTPALLCSVPGFDASGRVDDLAAEQNKQISSIAIGSAEGFNQAERAINMACKTGRWVLLKNVHLAPQWLVQLEKKMHSLQPHSGFRLFLTMEINPKVPVNLLRAGRIFVFEPPPGIRANLLRTFSTVPAARMMKTPSERARLYFLLAWFHAIVQERLRYVPLGWAKKYEFNESDLRVACDTLDTWIDTTAMGRTNLPPEKVPWDALVTLLSQSIYGGKIDNDFDQRLLTSFLKKLFTARSFEADFALVANVDGASGGLRHITMPDGTRRDHFLKWIENLTDRQTPSWLGLPNNAEKVLLTTRGTDLVSKLLKMQQLEDDDELAYSVEDQSEQSAVGRGEDGRPSWMKTLHNSATAWLELLPKNLQVLKRTVENIKDPLYRYFEREVTSGSRLLQTVILDLQDVVLICQGEKKQTNHHRSMLSELVRGIIPKGWKRYTVPAGCTVIQWITDFSNRVQQLQKVSQLVSQAGAKELQGFPVWLGGLLNPEAYITATRQCVAQANSWSLEELALDVTITDAGLKNDQKDCCFGVTGLKLQGAQCKNNELLLASTIMMDLPVTILKWIKISSEPRISKLTLPVYLNSTRTELLFTVDLAVAAGQESHSFYERGVAVLTSTALN.

The stem stretch occupies residues 1–1856; the sequence is MGDSLENPDT…TIHMANARFF (1856 aa). 3 coiled-coil regions span residues 530-565, 774-794, and 1264-1368; these read LDITKEGSEAWEAAVKRYEEKIDRVETRITAHLRDQ, SLIESVRTYERTLEKIEDRAS, and DDAL…ARLR. AAA stretches follow at residues 1857 to 2084, 2166 to 2437, 2541 to 2790, and 2884 to 3153; these read YGFE…VLIS, EEIR…FTRL, EVET…WVRG, and VFYE…GGRT. ATP is bound by residues 1895-1902, 2210-2217, 2580-2587, and 2922-2929; these read GPAGTGKT, GPSGSGKS, GPPGSGKT, and GVSGAGKT. Coiled coils occupy residues 3189–3261, 3382–3478, and 3723–3782; these read GLNK…EKRK, AIAQ…WEST, and EFRL…EIET. The interval 3189-3478 is stalk; that stretch reads GLNKIAETVE…NIERERWEST (290 aa). 2 AAA regions span residues 3539-3768 and 3989-4205; these read LSNP…DINQ and AHNV…TLDT.

This sequence belongs to the dynein heavy chain family. As to quaternary structure, consists of at least two heavy chains and a number of intermediate and light chains.

The protein resides in the cytoplasm. It localises to the cytoskeleton. Cytoplasmic dynein acts as a motor for the intracellular retrograde motility of vesicles and organelles along microtubules. Dynein has ATPase activity; the force-producing power stroke is thought to occur on release of ADP. The sequence is that of Dynein heavy chain, cytoplasmic (Dhc64C) from Drosophila melanogaster (Fruit fly).